The chain runs to 209 residues: Small ribosomal subunit protein uS4 (209 aa).

One can recognise an S4 RNA-binding domain in the interval 99–179 (GRLDSVAYRM…FPEWIEVDAK (81 aa)).

Belongs to the universal ribosomal protein uS4 family. As to quaternary structure, part of the 30S ribosomal subunit. Contacts protein S5. The interaction surface between S4 and S5 is involved in control of translational fidelity.

Functionally, one of the primary rRNA binding proteins, it binds directly to 16S rRNA where it nucleates assembly of the body of the 30S subunit. In terms of biological role, with S5 and S12 plays an important role in translational accuracy. This Azoarcus sp. (strain BH72) protein is Small ribosomal subunit protein uS4.